We begin with the raw amino-acid sequence, 563 residues long: Probable tRNA (uracil-O(2)-)-methyltransferase (563 aa).

A C3H1-type zinc finger spans residues Thr-536–His-563.

This sequence belongs to the TRM44 family.

Its subcellular location is the cytoplasm. The enzyme catalyses uridine(44) in tRNA(Ser) + S-adenosyl-L-methionine = 2'-O-methyluridine(44) in tRNA(Ser) + S-adenosyl-L-homocysteine + H(+). Probable adenosyl-L-methionine (AdoMet)-dependent tRNA (uracil-O(2)-)-methyltransferase. This chain is Probable tRNA (uracil-O(2)-)-methyltransferase, found in Caenorhabditis elegans.